We begin with the raw amino-acid sequence, 478 residues long: Divinyl ether synthase CYP74D2 (478 aa).

A heme-binding site is contributed by C431.

Belongs to the cytochrome P450 family. 9-divinyl ether synthase subfamily. As to expression, expressed in roots.

The catalysed reaction is (9S)-hydroperoxy-(10E,12Z)-octadecadienoate = colneleate + H2O. The enzyme catalyses (9S)-hydroperoxy-(10E,12Z,15Z)-octadecatrienoate = colnelenate + H2O. In terms of biological role, involved in the biosynthesis of the anti-fungal and antibacterial toxins colneleate and colnelenate. Can use (9S)-hydroperoxy-(10E,12Z)-octadecadienoate (9-HPOD) and (9S)-hydroperoxy-(10E,12Z,15Z)-octadecatrienoate (9-HPOT) as substrates but has no activity with the corresponding 13-hydroperoxides (13-HPOD and 13-HPOT). In Solanum tuberosum (Potato), this protein is Divinyl ether synthase CYP74D2.